The primary structure comprises 1331 residues: Mitogen-activated protein kinase kinase kinase 15 (1331 aa).

Over residues 1–13 the composition is skewed to gly residues; it reads MEGGGGSGGGGGP. Residues 1–61 form a disordered region; it reads MEGGGGSGGG…GEAEGGRGPR (61 aa). A Protein kinase domain is found at 656 to 912; the sequence is NGERVVLGKG…AADLLQEGFL (257 aa). ATP is bound by residues 662–670 and K685; that span reads LGKGSYGIV. The active-site Proton acceptor is the D777. Disordered regions lie at residues 934–964 and 983–1005; these read GTGTLALPSSGELVGSSSSEHGSISPDSDAQ and LSVPDESPALDDRSTALPPEERD. Residues 940-962 are compositionally biased toward low complexity; the sequence is LPSSGELVGSSSSEHGSISPDSD. A compositionally biased stretch (basic and acidic residues) spans 992–1005; it reads LDDRSTALPPEERD. Residues 1216-1236 are a coiled coil; the sequence is LVQKEREYQNLLRLILDQKTQ.

It belongs to the protein kinase superfamily. STE Ser/Thr protein kinase family. MAP kinase kinase kinase subfamily. The cofactor is Mg(2+).

It carries out the reaction L-seryl-[protein] + ATP = O-phospho-L-seryl-[protein] + ADP + H(+). The catalysed reaction is L-threonyl-[protein] + ATP = O-phospho-L-threonyl-[protein] + ADP + H(+). With respect to regulation, contains an N-terminal autoinhibitory domain. Activated by phosphorylation at Thr-816, inhibited by phosphorylation at Ser-928. Its function is as follows. Serine/threonine kinase which acts as a component of the MAP kinase signal transduction pathway. Once activated, acts as an upstream activator of the p38 MAPK signal transduction cascade through the phosphorylation and activation of several MAP kinase kinases. May function in a signal transduction pathway that is activated by various cell stresses and leads to apoptosis. Involved in phosphorylation of WNK4 in response to osmotic stress or hypotonic low-chloride stimulation via the p38 MAPK signal transduction cascade. The polypeptide is Mitogen-activated protein kinase kinase kinase 15 (Mus musculus (Mouse)).